Here is a 522-residue protein sequence, read N- to C-terminus: 5,6-dihydroxyindole-2-carboxylic acid oxidase (522 aa).

A signal peptide spans 1–21 (MLRTSCGGMLLLVHALGLVRA). Over 22 to 470 (QFPRACVTPE…RPLTPTQIVT (449 aa)) the chain is Lumenal, melanosome. 5 disulfides stabilise this stretch: cysteine 27/cysteine 38, cysteine 39/cysteine 59, cysteine 50/cysteine 89, cysteine 91/cysteine 100, and cysteine 103/cysteine 112. N-linked (GlcNAc...) asparagine glycosylation is found at asparagine 164 and asparagine 171. Zn(2+) is bound by residues histidine 182, histidine 205, and histidine 214. Intrachain disulfides connect cysteine 248–cysteine 251 and cysteine 280–cysteine 293. Asparagine 294 carries an N-linked (GlcNAc...) asparagine glycan. Residues histidine 367 and histidine 371 each coordinate Zn(2+). Asparagine 375 is a glycosylation site (N-linked (GlcNAc...) asparagine). Histidine 394 lines the Zn(2+) pocket. A helical transmembrane segment spans residues 471–491 (VAVVAALLLVAIIFAASTCVV). Over 492-522 (HLRGNRTEGRQPLLGDQYQRYEDHNKTQSVV) the chain is Cytoplasmic.

The protein belongs to the tyrosinase family. It depends on Cu(2+) as a cofactor. The cofactor is Zn(2+).

The protein resides in the melanosome membrane. It catalyses the reaction 2 5,6-dihydroxyindole-2-carboxylate + O2 = 2 indole-5,6-quinone-2-carboxylate + 2 H2O. It participates in pigment biosynthesis; melanin biosynthesis. Plays a role in melanin biosynthesis. Catalyzes the oxidation of 5,6-dihydroxyindole-2-carboxylic acid (DHICA) into indole-5,6-quinone-2-carboxylic acid. May regulate or influence the type of melanin synthesized. Also to a lower extent, capable of hydroxylating tyrosine and producing melanin. This is 5,6-dihydroxyindole-2-carboxylic acid oxidase (tyrp1) from Carassius auratus (Goldfish).